The following is a 141-amino-acid chain: Large ribosomal subunit protein uL13 (141 aa).

It belongs to the universal ribosomal protein uL13 family. Part of the 50S ribosomal subunit.

Functionally, this protein is one of the early assembly proteins of the 50S ribosomal subunit, although it is not seen to bind rRNA by itself. It is important during the early stages of 50S assembly. This is Large ribosomal subunit protein uL13 from Helicobacter acinonychis (strain Sheeba).